Here is a 100-residue protein sequence, read N- to C-terminus: NADH-quinone oxidoreductase subunit K (100 aa).

A run of 3 helical transmembrane segments spans residues 1–21 (MIGL…GLAG), 28–48 (ILLL…GFVA), and 64–84 (FIIA…ILWF).

Belongs to the complex I subunit 4L family. In terms of assembly, NDH-1 is composed of 14 different subunits. Subunits NuoA, H, J, K, L, M, N constitute the membrane sector of the complex.

The protein resides in the cell inner membrane. The catalysed reaction is a quinone + NADH + 5 H(+)(in) = a quinol + NAD(+) + 4 H(+)(out). Its function is as follows. NDH-1 shuttles electrons from NADH, via FMN and iron-sulfur (Fe-S) centers, to quinones in the respiratory chain. The immediate electron acceptor for the enzyme in this species is believed to be ubiquinone. Couples the redox reaction to proton translocation (for every two electrons transferred, four hydrogen ions are translocated across the cytoplasmic membrane), and thus conserves the redox energy in a proton gradient. The protein is NADH-quinone oxidoreductase subunit K of Helicobacter pylori (strain P12).